Here is a 574-residue protein sequence, read N- to C-terminus: ATP synthase subunit beta, mitochondrial (574 aa).

Residues 1 to 26 constitute a mitochondrion transit peptide; the sequence is MLSSVRLAALRAGKTNSVFQAVRAFA. 183–190 serves as a coordination point for ATP; sequence GGAGVGKT.

Belongs to the ATPase alpha/beta chains family. F-type ATPases have 2 components, CF(1) - the catalytic core - and CF(0) - the membrane proton channel. CF(1) has five subunits: alpha(3), beta(3), gamma(1), delta(1), epsilon(1). CF(0) has three main subunits: a, b and c.

It localises to the mitochondrion. The protein resides in the mitochondrion inner membrane. It carries out the reaction ATP + H2O + 4 H(+)(in) = ADP + phosphate + 5 H(+)(out). Its function is as follows. Mitochondrial membrane ATP synthase (F(1)F(0) ATP synthase or Complex V) produces ATP from ADP in the presence of a proton gradient across the membrane which is generated by electron transport complexes of the respiratory chain. F-type ATPases consist of two structural domains, F(1) - containing the extramembraneous catalytic core, and F(0) - containing the membrane proton channel, linked together by a central stalk and a peripheral stalk. During catalysis, ATP synthesis in the catalytic domain of F(1) is coupled via a rotary mechanism of the central stalk subunits to proton translocation. Subunits alpha and beta form the catalytic core in F(1). Rotation of the central stalk against the surrounding alpha(3)beta(3) subunits leads to hydrolysis of ATP in three separate catalytic sites on the beta subunits. This chain is ATP synthase subunit beta, mitochondrial (ATP2), found in Chlamydomonas reinhardtii (Chlamydomonas smithii).